We begin with the raw amino-acid sequence, 167 residues long: uncharacterized protein (167 aa).

4 consecutive transmembrane segments (helical) span residues 13 to 33, 37 to 57, 61 to 81, and 103 to 123; these read LIYLFIWGLIISGLSDLTWLI, VLAVSLFFISLQFSQKSFLPY, WFALVIFIVLMWATLSWKIGE, and LLLISLWLFLWNINDAVLVPS.

It is found in the cell membrane. This is an uncharacterized protein from Haemophilus influenzae (strain ATCC 51907 / DSM 11121 / KW20 / Rd).